We begin with the raw amino-acid sequence, 397 residues long: Phosphopentomutase (397 aa).

Positions 12, 289, 294, 330, 331, and 342 each coordinate Mn(2+).

It belongs to the phosphopentomutase family. It depends on Mn(2+) as a cofactor.

The protein localises to the cytoplasm. It carries out the reaction 2-deoxy-alpha-D-ribose 1-phosphate = 2-deoxy-D-ribose 5-phosphate. It catalyses the reaction alpha-D-ribose 1-phosphate = D-ribose 5-phosphate. It participates in carbohydrate degradation; 2-deoxy-D-ribose 1-phosphate degradation; D-glyceraldehyde 3-phosphate and acetaldehyde from 2-deoxy-alpha-D-ribose 1-phosphate: step 1/2. Functionally, isomerase that catalyzes the conversion of deoxy-ribose 1-phosphate (dRib-1-P) and ribose 1-phosphate (Rib-1-P) to deoxy-ribose 5-phosphate (dRib-5-P) and ribose 5-phosphate (Rib-5-P), respectively. This chain is Phosphopentomutase, found in Limosilactobacillus reuteri (strain DSM 20016) (Lactobacillus reuteri).